A 322-amino-acid polypeptide reads, in one-letter code: ATP-dependent 6-phosphofructokinase (322 aa).

Residue G11 coordinates ATP. 21–25 (RAVVR) is an ADP binding site. Residues 72–73 (RC) and 102–105 (GDGS) each bind ATP. D103 lines the Mg(2+) pocket. Residue 127–129 (TID) participates in substrate binding. Catalysis depends on D129, which acts as the Proton acceptor. An ADP-binding site is contributed by R156. Substrate is bound by residues R164 and 171–173 (MGR). Residues 187–189 (GAE), R213, and 215–217 (KKH) each bind ADP. Substrate-binding positions include E224, R245, and 251–254 (HVQR).

The protein belongs to the phosphofructokinase type A (PFKA) family. ATP-dependent PFK group I subfamily. Prokaryotic clade 'B1' sub-subfamily. In terms of assembly, homotetramer. It depends on Mg(2+) as a cofactor.

It localises to the cytoplasm. The enzyme catalyses beta-D-fructose 6-phosphate + ATP = beta-D-fructose 1,6-bisphosphate + ADP + H(+). Its pathway is carbohydrate degradation; glycolysis; D-glyceraldehyde 3-phosphate and glycerone phosphate from D-glucose: step 3/4. Allosterically activated by ADP and other diphosphonucleosides, and allosterically inhibited by phosphoenolpyruvate. Catalyzes the phosphorylation of D-fructose 6-phosphate to fructose 1,6-bisphosphate by ATP, the first committing step of glycolysis. This is ATP-dependent 6-phosphofructokinase from Staphylococcus aureus (strain JH1).